The primary structure comprises 361 residues: Dihydroorotate dehydrogenase (quinone) (361 aa).

FMN is bound by residues 67-71 (AGLDK) and T91. K71 provides a ligand contact to substrate. Substrate is bound at residue 116-120 (NRMGF). N145 and N178 together coordinate FMN. Substrate is bound at residue N178. Residue S181 is the Nucleophile of the active site. Position 183 (N183) interacts with substrate. K223 and G251 together coordinate FMN. Substrate is bound at residue 252–253 (NT). FMN is bound by residues G273, G302, and 323 to 324 (YT).

Belongs to the dihydroorotate dehydrogenase family. Type 2 subfamily. In terms of assembly, monomer. FMN serves as cofactor.

Its subcellular location is the cell membrane. The catalysed reaction is (S)-dihydroorotate + a quinone = orotate + a quinol. The protein operates within pyrimidine metabolism; UMP biosynthesis via de novo pathway; orotate from (S)-dihydroorotate (quinone route): step 1/1. Catalyzes the conversion of dihydroorotate to orotate with quinone as electron acceptor. This Deinococcus geothermalis (strain DSM 11300 / CIP 105573 / AG-3a) protein is Dihydroorotate dehydrogenase (quinone).